Reading from the N-terminus, the 46-residue chain is Spectrin alpha chain, non-erythrocytic 1 (46 aa).

6 Spectrin repeats span residues 1–5 (AQLAD), 7–14 (FHLQQFFR), 15–20 (SQLLGS), 21–26 (AHEVQR), 27–35 (LAQFVEHWK), and 39–46 (DLFLTFAK).

It belongs to the spectrin family. Associates with the gamma-tubulin complex in brain, but not in kidney, liver, sperm, or uterus. Like erythrocyte spectrin, the spectrin-like proteins are capable of forming dimers which can further associate to tetramers. Interacts with isoform 1 of ACP1. Interacts with CALM and EMD. Interacts (via C-terminal spectrin repeats) with TRPC4. Identified in a complex with ACTN4, CASK, IQGAP1, MAGI2, NPHS1 and SPTBN1. Interacts with CLN3; this interaction regulates the fodrin localization at the plasma membrane.

Its subcellular location is the cytoplasm. The protein localises to the cytoskeleton. The protein resides in the cell cortex. Functionally, fodrin, which seems to be involved in secretion, interacts with calmodulin in a calcium-dependent manner and is thus candidate for the calcium-dependent movement of the cytoskeleton at the membrane. The polypeptide is Spectrin alpha chain, non-erythrocytic 1 (SPTAN1) (Capra hircus (Goat)).